Consider the following 234-residue polypeptide: MSTENMILDVHLAEEALPKKAGGPQSSRRCMLLSLLSFLLVAGATTLFCLLHFGVIGPQKEELPDGLRLVNPLTQTLTLRSSGIPSDKPAAHVIANPQNKGELQWLNRRANTLLTNGMQLVDNQLVVPSDGLYLIYSQVLFTGLGCPSTPVLFTHTVSCVAVSYNNKVNLLSAIKSPCQKETAEGAEAKPWYEPIYQGGVFQLQKGDRLSAEVNLPRYLDFAESGQVYFGVIAL.

Topologically, residues 1–35 (MSTENMILDVHLAEEALPKKAGGPQSSRRCMLLSL) are cytoplasmic. Ser2 is subject to Phosphoserine; by CK1. N6-myristoyl lysine attachment occurs at residues Lys19 and Lys20. A helical; Signal-anchor for type II membrane protein transmembrane segment spans residues 36 to 56 (LSFLLVAGATTLFCLLHFGVI). Topologically, residues 57–234 (GPQKEELPDG…GQVYFGVIAL (178 aa)) are extracellular. The O-linked (GalNAc...) serine; in soluble form glycan is linked to Ser82. The THD domain occupies 89–234 (PAAHVIANPQ…GQVYFGVIAL (146 aa)). A disulfide bond links Cys146 and Cys178.

It belongs to the tumor necrosis factor family. As to quaternary structure, homotrimer. Interacts with SPPL2B. In terms of processing, the soluble form derives from the membrane form by proteolytic processing. The membrane-bound form is further proteolytically processed by SPPL2A or SPPL2B through regulated intramembrane proteolysis producing TNF intracellular domains (ICD1 and ICD2) released in the cytosol and TNF C-domain 1 and C-domain 2 secreted into the extracellular space. Post-translationally, the membrane form, but not the soluble form, is phosphorylated on serine residues. Dephosphorylation of the membrane form occurs by binding to soluble TNFRSF1A/TNFR1. O-glycosylated; glycans contain galactose, N-acetylgalactosamine and N-acetylneuraminic acid. In terms of processing, the soluble form is demyristoylated by SIRT6, promoting its secretion.

It localises to the cell membrane. The protein resides in the membrane. The protein localises to the secreted. Cytokine that binds to TNFRSF1A/TNFR1 and TNFRSF1B/TNFBR. It is mainly secreted by macrophages and can induce cell death of certain tumor cell lines. It is potent pyrogen causing fever by direct action or by stimulation of interleukin-1 secretion and is implicated in the induction of cachexia, Under certain conditions it can stimulate cell proliferation and induce cell differentiation. Induces insulin resistance in adipocytes via inhibition of insulin-induced IRS1 tyrosine phosphorylation and insulin-induced glucose uptake. Induces GKAP42 protein degradation in adipocytes which is partially responsible for TNF-induced insulin resistance. Plays a role in angiogenesis by inducing VEGF production synergistically with IL1B and IL6. Promotes osteoclastogenesis and therefore mediates bone resorption. Its function is as follows. The TNF intracellular domain (ICD) form induces IL12 production in dendritic cells. The chain is Tumor necrosis factor (TNF) from Tupaia tana (Large tree shrew).